Reading from the N-terminus, the 46-residue chain is Defensin Tk-AMP-D6 (46 aa).

Cystine bridges form between C3-C46, C14-C34, C20-C40, and C24-C42.

Functionally, plant defense peptide. This is Defensin Tk-AMP-D6 from Triticum kiharae (Wheat).